The chain runs to 600 residues: Glutamine--fructose-6-phosphate aminotransferase [isomerizing] (600 aa).

The active-site Nucleophile; for GATase activity is Cys2. The Glutamine amidotransferase type-2 domain occupies 2-217; the sequence is CGIVGYIGQL…DKEMVIVTDK (216 aa). SIS domains are found at residues 283-422 and 452-590; these read ISNA…SRGK and IARE…VDKP. Lys595 acts as the For Fru-6P isomerization activity in catalysis.

Homodimer.

It localises to the cytoplasm. It catalyses the reaction D-fructose 6-phosphate + L-glutamine = D-glucosamine 6-phosphate + L-glutamate. Catalyzes the first step in hexosamine metabolism, converting fructose-6P into glucosamine-6P using glutamine as a nitrogen source. This chain is Glutamine--fructose-6-phosphate aminotransferase [isomerizing], found in Bacillus licheniformis (strain ATCC 14580 / DSM 13 / JCM 2505 / CCUG 7422 / NBRC 12200 / NCIMB 9375 / NCTC 10341 / NRRL NRS-1264 / Gibson 46).